Consider the following 54-residue polypeptide: ATP synthase protein 8 (54 aa).

Residues Trp-8–Leu-28 form a helical membrane-spanning segment.

Belongs to the ATPase protein 8 family. As to quaternary structure, F-type ATPases have 2 components, CF(1) - the catalytic core - and CF(0) - the membrane proton channel.

The protein localises to the mitochondrion membrane. In terms of biological role, mitochondrial membrane ATP synthase (F(1)F(0) ATP synthase or Complex V) produces ATP from ADP in the presence of a proton gradient across the membrane which is generated by electron transport complexes of the respiratory chain. F-type ATPases consist of two structural domains, F(1) - containing the extramembraneous catalytic core and F(0) - containing the membrane proton channel, linked together by a central stalk and a peripheral stalk. During catalysis, ATP synthesis in the catalytic domain of F(1) is coupled via a rotary mechanism of the central stalk subunits to proton translocation. Part of the complex F(0) domain. Minor subunit located with subunit a in the membrane. This Patiria pectinifera (Starfish) protein is ATP synthase protein 8 (MT-ATP8).